A 279-amino-acid polypeptide reads, in one-letter code: Putative pyruvate, phosphate dikinase regulatory protein (279 aa).

Residue 156–163 (GISRVGKT) participates in ADP binding.

This sequence belongs to the pyruvate, phosphate/water dikinase regulatory protein family. PDRP subfamily.

It catalyses the reaction N(tele)-phospho-L-histidyl/L-threonyl-[pyruvate, phosphate dikinase] + ADP = N(tele)-phospho-L-histidyl/O-phospho-L-threonyl-[pyruvate, phosphate dikinase] + AMP + H(+). The enzyme catalyses N(tele)-phospho-L-histidyl/O-phospho-L-threonyl-[pyruvate, phosphate dikinase] + phosphate + H(+) = N(tele)-phospho-L-histidyl/L-threonyl-[pyruvate, phosphate dikinase] + diphosphate. In terms of biological role, bifunctional serine/threonine kinase and phosphorylase involved in the regulation of the pyruvate, phosphate dikinase (PPDK) by catalyzing its phosphorylation/dephosphorylation. The sequence is that of Putative pyruvate, phosphate dikinase regulatory protein from Chloroflexus aurantiacus (strain ATCC 29366 / DSM 635 / J-10-fl).